A 314-amino-acid polypeptide reads, in one-letter code: 4-hydroxy-3-methylbut-2-enyl diphosphate reductase (314 aa).

Cysteine 12 contacts [4Fe-4S] cluster. Positions 43 and 81 each coordinate (2E)-4-hydroxy-3-methylbut-2-enyl diphosphate. The dimethylallyl diphosphate site is built by histidine 43 and histidine 81. Positions 43 and 81 each coordinate isopentenyl diphosphate. Residue cysteine 103 coordinates [4Fe-4S] cluster. Histidine 131 lines the (2E)-4-hydroxy-3-methylbut-2-enyl diphosphate pocket. Dimethylallyl diphosphate is bound at residue histidine 131. Histidine 131 serves as a coordination point for isopentenyl diphosphate. Residue glutamate 133 is the Proton donor of the active site. Residue threonine 170 coordinates (2E)-4-hydroxy-3-methylbut-2-enyl diphosphate. Residue cysteine 198 coordinates [4Fe-4S] cluster. Serine 226, asparagine 228, and serine 271 together coordinate (2E)-4-hydroxy-3-methylbut-2-enyl diphosphate. Dimethylallyl diphosphate contacts are provided by serine 226, asparagine 228, and serine 271. Positions 226, 228, and 271 each coordinate isopentenyl diphosphate.

The protein belongs to the IspH family. Requires [4Fe-4S] cluster as cofactor.

It catalyses the reaction isopentenyl diphosphate + 2 oxidized [2Fe-2S]-[ferredoxin] + H2O = (2E)-4-hydroxy-3-methylbut-2-enyl diphosphate + 2 reduced [2Fe-2S]-[ferredoxin] + 2 H(+). The enzyme catalyses dimethylallyl diphosphate + 2 oxidized [2Fe-2S]-[ferredoxin] + H2O = (2E)-4-hydroxy-3-methylbut-2-enyl diphosphate + 2 reduced [2Fe-2S]-[ferredoxin] + 2 H(+). Its pathway is isoprenoid biosynthesis; dimethylallyl diphosphate biosynthesis; dimethylallyl diphosphate from (2E)-4-hydroxy-3-methylbutenyl diphosphate: step 1/1. The protein operates within isoprenoid biosynthesis; isopentenyl diphosphate biosynthesis via DXP pathway; isopentenyl diphosphate from 1-deoxy-D-xylulose 5-phosphate: step 6/6. In terms of biological role, catalyzes the conversion of 1-hydroxy-2-methyl-2-(E)-butenyl 4-diphosphate (HMBPP) into a mixture of isopentenyl diphosphate (IPP) and dimethylallyl diphosphate (DMAPP). Acts in the terminal step of the DOXP/MEP pathway for isoprenoid precursor biosynthesis. In Bacillus subtilis (strain 168), this protein is 4-hydroxy-3-methylbut-2-enyl diphosphate reductase.